The chain runs to 60 residues: Short neurotoxin 1 (60 aa).

Disulfide bonds link Cys3–Cys22, Cys17–Cys39, Cys41–Cys52, and Cys53–Cys58.

This sequence belongs to the three-finger toxin family. Short-chain subfamily. Type I alpha-neurotoxin sub-subfamily. In terms of tissue distribution, expressed by the venom gland.

The protein localises to the secreted. Its function is as follows. Binds to muscle nicotinic acetylcholine receptor (nAChR) and inhibit acetylcholine from binding to the receptor, thereby impairing neuromuscular transmission. The sequence is that of Short neurotoxin 1 from Hydrophis cyanocinctus (Asian annulated sea snake).